The following is a 775-amino-acid chain: Zinc finger protein GLIS3 (775 aa).

Disordered stretches follow at residues 121-147 (TESSHSPYPSPRHSSTRSHSARSKKRA) and 282-314 (PGSTVDLPPAPPLPPLPPPPGPPPPYHAHAHLH). Residues 123–133 (SSHSPYPSPRH) are compositionally biased toward low complexity. The segment covering 134–147 (SSTRSHSARSKKRA) has biased composition (basic residues). A compositionally biased stretch (pro residues) spans 289 to 307 (PPAPPLPPLPPPPGPPPPY). The segment at 345 to 370 (HCCRWIDCSALYDQQEELVRHIEKVH) adopts a C2H2-type 1 zinc-finger fold. The C2H2-type 2; atypical zinc finger occupies 379 to 406 (FTCFWAGCPRRYKPFNARYKLLIHMRVH). 3 C2H2-type zinc fingers span residues 412–436 (NKCTFEGCEKAFSRLENLKIHLRSH), 442–466 (YLCQHPGCQKAFSNSSDRAKHQRTH), and 472–496 (YACQIPGCTKRYTDPSSLRKHVKAH). 2 disordered regions span residues 485-512 (DPSSLRKHVKAHSSKEQQARKKLRSSTE) and 529-665 (PATS…QPNG). Positions 491 to 507 (KHVKAHSSKEQQARKKL) match the Bipartite nuclear localization signal motif. A compositionally biased stretch (basic and acidic residues) spans 497–512 (SSKEQQARKKLRSSTE). 3 stretches are compositionally biased toward polar residues: residues 557-567 (IFSSNYSSRSG), 588-600 (VQGSPHNPSSQLP), and 632-663 (SILQRTQPPYTQQPSGSHLKSYQPETNSSFQP).

This sequence belongs to the GLI C2H2-type zinc-finger protein family. In the adult, expressed at high levels in the kidney and at lower levels in the brain, skeletal muscle, pancreas, liver, lung, thymus and ovary.

The protein resides in the nucleus. Its function is as follows. Acts both as a repressor and an activator of transcription. Binds to the consensus sequence 5'-GACCACCCAC-3'. The chain is Zinc finger protein GLIS3 (GLIS3) from Homo sapiens (Human).